The primary structure comprises 308 residues: Aspartate carbamoyltransferase catalytic subunit (308 aa).

Positions 55 and 56 each coordinate carbamoyl phosphate. L-aspartate is bound at residue Lys83. Carbamoyl phosphate is bound by residues Arg105, His133, and Gln136. The L-aspartate site is built by Arg166 and Arg220. Carbamoyl phosphate-binding residues include Gly261 and Pro262.

The protein belongs to the aspartate/ornithine carbamoyltransferase superfamily. ATCase family. As to quaternary structure, heterododecamer (2C3:3R2) of six catalytic PyrB chains organized as two trimers (C3), and six regulatory PyrI chains organized as three dimers (R2).

It catalyses the reaction carbamoyl phosphate + L-aspartate = N-carbamoyl-L-aspartate + phosphate + H(+). It participates in pyrimidine metabolism; UMP biosynthesis via de novo pathway; (S)-dihydroorotate from bicarbonate: step 2/3. In terms of biological role, catalyzes the condensation of carbamoyl phosphate and aspartate to form carbamoyl aspartate and inorganic phosphate, the committed step in the de novo pyrimidine nucleotide biosynthesis pathway. The chain is Aspartate carbamoyltransferase catalytic subunit from Chlorobaculum tepidum (strain ATCC 49652 / DSM 12025 / NBRC 103806 / TLS) (Chlorobium tepidum).